A 1159-amino-acid polypeptide reads, in one-letter code: Ferroxidase HEPHL1 (1159 aa).

The first 24 residues, 1–24 (MPRKQPAGCIFLLTFLGLSGLVGT), serve as a signal peptide directing secretion. Plastocyanin-like domains follow at residues 25–207 (VTRT…LLVC), 218–366 (TRND…VDNC), 379–561 (QRRY…LLVC), 571–719 (TQKG…VSSC), 731–907 (MIRT…LITC), and 915–1092 (KGRR…VPSN). At 25-1114 (VTRTYYIGIV…KNLGPTGAKA (1090 aa)) the chain is on the extracellular side. His-127 and His-129 together coordinate Cu cation. Asn-161 carries an N-linked (GlcNAc...) asparagine glycan. Cysteines 181 and 207 form a disulfide. Positions 187 and 189 each coordinate Cu cation. Asn-236 is a glycosylation site (N-linked (GlcNAc...) asparagine). Residues Cys-285 and Cys-366 are joined by a disulfide bond. Residues His-304, Cys-347, and His-352 each coordinate Cu cation. N-linked (GlcNAc...) asparagine glycosylation occurs at Asn-407. Cys-535 and Cys-561 are joined by a disulfide. Asn-589 carries an N-linked (GlcNAc...) asparagine glycan. A disulfide bridge links Cys-638 with Cys-719. The Cu cation site is built by His-657, Cys-700, His-705, and Met-710. N-linked (GlcNAc...) asparagine glycosylation occurs at Asn-772. Cys-881 and Cys-907 are joined by a disulfide. Residue Asn-935 is glycosylated (N-linked (GlcNAc...) asparagine). Cu cation-binding residues include His-1003, His-1006, His-1008, His-1048, Cys-1049, His-1050, His-1054, and Met-1059. A helical membrane pass occupies residues 1115 to 1135 (ALVILFIIGLLLLITTVILSL). Topologically, residues 1136 to 1159 (RLCSAMKQTDYQQVQSCALPTDAL) are cytoplasmic.

Belongs to the multicopper oxidase family. The cofactor is Cu cation.

The protein resides in the membrane. The catalysed reaction is 4 Fe(2+) + O2 + 4 H(+) = 4 Fe(3+) + 2 H2O. Is a copper-binding glycoprotein with ferroxidase activity. It oxidizes Fe(2+) to Fe(3+) without releasing radical oxygen species. May be involved in the regulation of intracellular iron content. In Homo sapiens (Human), this protein is Ferroxidase HEPHL1 (HEPHL1).